Consider the following 666-residue polypeptide: MVDDEDDITFDSPEEEIAHYREKYRQALDMLTDTRAELEEFQQSSKELEDEMEQELAANDKQQADLREKIKRLDAEKEEWRTKHIALQKMHSSTTSAMQREMDNLRSERDKTLVALRDLEMGNDELERNERVAISSLLDLESKYNRAIEEKTLLEQDLAQKDELETETQRLKDELREANEEISILKDQLARAIATPPSSVSTSSPIHDAACDLSRIHLSDDINASPLPPPVPSKNKSITPEGHSPRRGLSRSGTMSSIPVASPSTKRFSQQIPHSPSFSTLSRSTTSRNLAAAAGTPGSPALARSRSGIPQASPARGIVLASHQQTKSRGFKLLHDLQARLKATDDKLGGAKVPRRNVSNPASVFGVGKRVTSTTSTTSSTTTAPAPHARVTALAKDHNTTPTAQSQQFPGSGIMSPGWVLVGEGEGEDTPTGPWSMTLPAEPNSPLDPTFRSSSTTSNRSLPSRPGIPSPLASGSARSTTSGTAQRQAGQRPSSRLGLKASRRDSEARPLSPSMIPVPSFSSRPMSPDVYQPLRSATPTSGFSSFSASASTSNPPRPNSRTGKRNPIGRGPPPLSSSTRLHHQRSRQSLSGAGPTPTTGADKVERAKRGPRRSSLSNMDKPSLMSASPGSRTPSGRPTSVHVFRETPPPVPRIPSAILKESKVKK.

A coiled-coil region spans residues 14-195 (EEEIAHYREK…KDQLARAIAT (182 aa)). Disordered stretches follow at residues 40–64 (EFQQSSKELEDEMEQELAANDKQQA), 220–310 (DDIN…SGIP), 369–388 (KRVTSTTSTTSSTTTAPAPH), and 397–666 (DHNT…KVKK). A compositionally biased stretch (polar residues) spans 251 to 274 (RSGTMSSIPVASPSTKRFSQQIPH). 2 stretches are compositionally biased toward low complexity: residues 275–287 (SPSFSTLSRSTTS) and 372–383 (TSTTSTTSSTTT). A compositionally biased stretch (polar residues) spans 400–410 (TTPTAQSQQFP). Composition is skewed to low complexity over residues 449–465 (PTFRSSSTTSNRSLPSR), 473–485 (ASGSARSTTSGTA), and 536–554 (SATPTSGFSSFSASASTSN). 2 stretches are compositionally biased toward polar residues: residues 587–599 (RQSLSGAGPTPTT) and 614–638 (SSLSNMDKPSLMSASPGSRTPSGRP).

It belongs to the nudE family. In terms of assembly, self-associates. Interacts with PAC1.

It localises to the cytoplasm. It is found in the cytoskeleton. Its function is as follows. Required for nuclear migration. This Cryptococcus neoformans var. neoformans serotype D (strain B-3501A) (Filobasidiella neoformans) protein is Nuclear distribution protein nudE homolog 1 (NDE1).